A 148-amino-acid chain; its full sequence is 6,7-dimethyl-8-ribityllumazine synthase (148 aa).

5-amino-6-(D-ribitylamino)uracil-binding positions include Phe-13, 44–46 (ALE), and 73–75 (MVI). Position 78-79 (78-79 (ET)) interacts with (2S)-2-hydroxy-3-oxobutyl phosphate. The active-site Proton donor is the His-81. Residue Asn-106 participates in 5-amino-6-(D-ribitylamino)uracil binding. Residue Arg-120 participates in (2S)-2-hydroxy-3-oxobutyl phosphate binding.

Belongs to the DMRL synthase family.

The enzyme catalyses (2S)-2-hydroxy-3-oxobutyl phosphate + 5-amino-6-(D-ribitylamino)uracil = 6,7-dimethyl-8-(1-D-ribityl)lumazine + phosphate + 2 H2O + H(+). It functions in the pathway cofactor biosynthesis; riboflavin biosynthesis; riboflavin from 2-hydroxy-3-oxobutyl phosphate and 5-amino-6-(D-ribitylamino)uracil: step 1/2. Catalyzes the formation of 6,7-dimethyl-8-ribityllumazine by condensation of 5-amino-6-(D-ribitylamino)uracil with 3,4-dihydroxy-2-butanone 4-phosphate. This is the penultimate step in the biosynthesis of riboflavin. This is 6,7-dimethyl-8-ribityllumazine synthase from Agrobacterium fabrum (strain C58 / ATCC 33970) (Agrobacterium tumefaciens (strain C58)).